A 481-amino-acid chain; its full sequence is 3-isopropylmalate dehydratase large subunit (481 aa).

Residues Cys363, Cys423, and Cys426 each contribute to the [4Fe-4S] cluster site. The segment at 432-459 (DQLKPGERSASTSNRNFEGRQGPGGRTH) is disordered.

It belongs to the aconitase/IPM isomerase family. LeuC type 1 subfamily. As to quaternary structure, heterodimer of LeuC and LeuD. Requires [4Fe-4S] cluster as cofactor.

It catalyses the reaction (2R,3S)-3-isopropylmalate = (2S)-2-isopropylmalate. The protein operates within amino-acid biosynthesis; L-leucine biosynthesis; L-leucine from 3-methyl-2-oxobutanoate: step 2/4. In terms of biological role, catalyzes the isomerization between 2-isopropylmalate and 3-isopropylmalate, via the formation of 2-isopropylmaleate. The sequence is that of 3-isopropylmalate dehydratase large subunit from Corynebacterium glutamicum (strain ATCC 13032 / DSM 20300 / JCM 1318 / BCRC 11384 / CCUG 27702 / LMG 3730 / NBRC 12168 / NCIMB 10025 / NRRL B-2784 / 534).